The primary structure comprises 207 residues: Small ribosomal subunit protein uS4 (207 aa).

In terms of domain architecture, S4 RNA-binding spans S97–L160.

This sequence belongs to the universal ribosomal protein uS4 family. Part of the 30S ribosomal subunit. Contacts protein S5. The interaction surface between S4 and S5 is involved in control of translational fidelity.

In terms of biological role, one of the primary rRNA binding proteins, it binds directly to 16S rRNA where it nucleates assembly of the body of the 30S subunit. Functionally, with S5 and S12 plays an important role in translational accuracy. The protein is Small ribosomal subunit protein uS4 of Burkholderia mallei (strain NCTC 10247).